We begin with the raw amino-acid sequence, 86 residues long: MANIKSQKKRVLTNEKAHKRNVAVKSSLKTAVRATREAIAAGDKAAAEAAYKVAAQKLDKAAGAGVIHKNQAANRKSGLAVAINAL.

The protein belongs to the bacterial ribosomal protein bS20 family.

Its function is as follows. Binds directly to 16S ribosomal RNA. This chain is Small ribosomal subunit protein bS20, found in Bifidobacterium adolescentis (strain ATCC 15703 / DSM 20083 / NCTC 11814 / E194a).